A 210-amino-acid polypeptide reads, in one-letter code: NAD(P)H-hydrate epimerase (210 aa).

Positions 11-210 (AHNFDDYTIN…TVADIGIYEP (200 aa)) constitute a YjeF N-terminal domain. Residue 60–64 (NNGGD) participates in (6S)-NADPHX binding. Positions 61 and 123 each coordinate K(+). (6S)-NADPHX is bound by residues 127-133 (GVGLSRD) and D156. Residue T159 coordinates K(+).

The protein belongs to the NnrE/AIBP family. It depends on K(+) as a cofactor.

It catalyses the reaction (6R)-NADHX = (6S)-NADHX. It carries out the reaction (6R)-NADPHX = (6S)-NADPHX. Functionally, catalyzes the epimerization of the S- and R-forms of NAD(P)HX, a damaged form of NAD(P)H that is a result of enzymatic or heat-dependent hydration. This is a prerequisite for the S-specific NAD(P)H-hydrate dehydratase to allow the repair of both epimers of NAD(P)HX. This chain is NAD(P)H-hydrate epimerase, found in Oenococcus oeni (strain ATCC BAA-331 / PSU-1).